The chain runs to 285 residues: Ribosomal RNA small subunit methyltransferase H (285 aa).

Residues 34–36 (AGH), aspartate 51, phenylalanine 75, aspartate 96, and histidine 103 contribute to the S-adenosyl-L-methionine site. Residues 259–285 (LVPSEKEAAQNPRARSAKLRAAEKEAP) form a disordered region.

The protein belongs to the methyltransferase superfamily. RsmH family.

It localises to the cytoplasm. The enzyme catalyses cytidine(1402) in 16S rRNA + S-adenosyl-L-methionine = N(4)-methylcytidine(1402) in 16S rRNA + S-adenosyl-L-homocysteine + H(+). Functionally, specifically methylates the N4 position of cytidine in position 1402 (C1402) of 16S rRNA. This Thermus thermophilus (strain ATCC 27634 / DSM 579 / HB8) protein is Ribosomal RNA small subunit methyltransferase H.